Here is a 98-residue protein sequence, read N- to C-terminus: Cytochrome b (98 aa).

The next 3 helical transmembrane spans lie at 1–18 (LLGL…FLAM), 42–63 (WLIR…YLHV), and 78–98 (WNIG…GYVL). Residues H48 and H62 each coordinate heme b.

This sequence belongs to the cytochrome b family. As to quaternary structure, the cytochrome bc1 complex contains 3 respiratory subunits (MT-CYB, CYC1 and UQCRFS1), 2 core proteins (UQCRC1 and UQCRC2) and probably 6 low-molecular weight proteins. Heme b is required as a cofactor.

Its subcellular location is the mitochondrion inner membrane. Component of the ubiquinol-cytochrome c reductase complex (complex III or cytochrome b-c1 complex) that is part of the mitochondrial respiratory chain. The b-c1 complex mediates electron transfer from ubiquinol to cytochrome c. Contributes to the generation of a proton gradient across the mitochondrial membrane that is then used for ATP synthesis. This chain is Cytochrome b (mt-cyb), found in Scaphirhynchus platorynchus (Shovelnose sturgeon).